The chain runs to 186 residues: Ribosome-recycling factor (186 aa).

The protein belongs to the RRF family.

It is found in the cytoplasm. In terms of biological role, responsible for the release of ribosomes from messenger RNA at the termination of protein biosynthesis. May increase the efficiency of translation by recycling ribosomes from one round of translation to another. This is Ribosome-recycling factor from Chlorobium limicola (strain DSM 245 / NBRC 103803 / 6330).